The following is a 265-amino-acid chain: Undecaprenyl-diphosphatase (265 aa).

The next 7 membrane-spanning stretches (helical) occupy residues Ser38–Trp58, Leu80–Glu100, Pro107–Ala127, Ile135–Gly155, Thr178–Leu198, Ile216–Ile236, and Phe244–Ile264.

It belongs to the UppP family.

Its subcellular location is the cell inner membrane. The catalysed reaction is di-trans,octa-cis-undecaprenyl diphosphate + H2O = di-trans,octa-cis-undecaprenyl phosphate + phosphate + H(+). Functionally, catalyzes the dephosphorylation of undecaprenyl diphosphate (UPP). Confers resistance to bacitracin. The protein is Undecaprenyl-diphosphatase of Rhizobium johnstonii (strain DSM 114642 / LMG 32736 / 3841) (Rhizobium leguminosarum bv. viciae).